Reading from the N-terminus, the 155-residue chain is 3-hydroxyacyl-[acyl-carrier-protein] dehydratase FabZ (155 aa).

Histidine 57 is an active-site residue.

This sequence belongs to the thioester dehydratase family. FabZ subfamily.

Its subcellular location is the cytoplasm. It carries out the reaction a (3R)-hydroxyacyl-[ACP] = a (2E)-enoyl-[ACP] + H2O. Involved in unsaturated fatty acids biosynthesis. Catalyzes the dehydration of short chain beta-hydroxyacyl-ACPs and long chain saturated and unsaturated beta-hydroxyacyl-ACPs. This Cereibacter sphaeroides (strain KD131 / KCTC 12085) (Rhodobacter sphaeroides) protein is 3-hydroxyacyl-[acyl-carrier-protein] dehydratase FabZ.